Reading from the N-terminus, the 367-residue chain is Leu/Ile/Val-binding protein (367 aa).

An N-terminal signal peptide occupies residues 1–23; that stretch reads MNIKGKALLAGCIALAFSNMALA. A disulfide bridge connects residues C76 and C101.

The protein belongs to the leucine-binding protein family.

It is found in the periplasm. Its function is as follows. This protein is a component of the leucine, isoleucine, valine, (threonine) transport system, which is one of the two periplasmic binding protein-dependent transport systems of the high-affinity transport of the branched-chain amino acids. This Escherichia coli O157:H7 protein is Leu/Ile/Val-binding protein (livJ).